A 299-amino-acid polypeptide reads, in one-letter code: MRSKPDWLKVKMPTGDTFYQMRNLMKLYKLNTVCEEAACPNVGECWNKKHATVMILGSTCTRACAFCNVATGIPDKLDPHEPQNLAKAINSLKLHHVVITSVDRDDLPDGGAGHFVECIEEIRKRDDNITIEILTPDFLNKHGAIDKIAAVAPDVYNHNVETVPRLYARIRPKARYFHSLYLLKAVKYKNPKIFTKSGIMVGLGETKEEIYQVMDDLRSADVDFITIGQYLQPTPKHAVVDRYVTPEEFDHYKYVAYSKGFLMVASGPLVRSSYHAEEDFQKLKQNRTAMLMRAESNSI.

Cys-34, Cys-39, Cys-45, Cys-60, Cys-64, Cys-67, and Ser-273 together coordinate [4Fe-4S] cluster. In terms of domain architecture, Radical SAM core spans 46–262 (WNKKHATVMI…KYVAYSKGFL (217 aa)).

This sequence belongs to the radical SAM superfamily. Lipoyl synthase family. The cofactor is [4Fe-4S] cluster.

The protein resides in the cytoplasm. The enzyme catalyses [[Fe-S] cluster scaffold protein carrying a second [4Fe-4S](2+) cluster] + N(6)-octanoyl-L-lysyl-[protein] + 2 oxidized [2Fe-2S]-[ferredoxin] + 2 S-adenosyl-L-methionine + 4 H(+) = [[Fe-S] cluster scaffold protein] + N(6)-[(R)-dihydrolipoyl]-L-lysyl-[protein] + 4 Fe(3+) + 2 hydrogen sulfide + 2 5'-deoxyadenosine + 2 L-methionine + 2 reduced [2Fe-2S]-[ferredoxin]. The protein operates within protein modification; protein lipoylation via endogenous pathway; protein N(6)-(lipoyl)lysine from octanoyl-[acyl-carrier-protein]: step 2/2. Functionally, catalyzes the radical-mediated insertion of two sulfur atoms into the C-6 and C-8 positions of the octanoyl moiety bound to the lipoyl domains of lipoate-dependent enzymes, thereby converting the octanoylated domains into lipoylated derivatives. The chain is Lipoyl synthase from Ehrlichia canis (strain Jake).